Consider the following 358-residue polypeptide: C-C chemokine receptor type 3 (358 aa).

The Extracellular portion of the chain corresponds to 1–43; that stretch reads MATYPEEAELETEFPGTTFYDYEFAQPCFKVSITDLGAQFLPS. Residues 44-64 traverse the membrane as a helical segment; that stretch reads LFSLVFIVGLLGNITVIVVLT. The Cytoplasmic portion of the chain corresponds to 65-74; the sequence is KYQKLKIMTN. A helical transmembrane segment spans residues 75 to 95; it reads IYLLNLAISDLLFLFTLPFWT. Residues 96–112 lie on the Extracellular side of the membrane; sequence YYVHWNKWVFGHFMCKI. Residues 113–133 traverse the membrane as a helical segment; the sequence is ISGLYYVGLFSEIFFIILLTI. At 134–154 the chain is on the cytoplasmic side; it reads DRYLAIVHAVFALRTRTVTFG. Residues 155-175 form a helical membrane-spanning segment; it reads IITSVITWVLAVLAALPEFMF. The Extracellular segment spans residues 176–206; the sequence is YGTQGHFEVLFCGPSYPEKKEHHWKRFQALR. A helical transmembrane segment spans residues 207-227; it reads MNIFGLALPLLIMIICYTGII. Topologically, residues 228–243 are cytoplasmic; that stretch reads KTLLRCPSKKKYKAIR. Residues 244 to 264 form a helical membrane-spanning segment; that stretch reads LIFVIMVVFFVFWTPYNLLLL. The Extracellular segment spans residues 265 to 287; the sequence is FSAFDLSFLDDCERSKQLDMAKH. Residues 288-308 form a helical membrane-spanning segment; it reads VTEVIAHTHCCINPIIYAFVG. Residues 309-358 are Cytoplasmic-facing; sequence ERFQKYLRHFLHRNVTMHLSKYIPFFTSEKLERSSSISPSSGDPELSVVF.

This sequence belongs to the G-protein coupled receptor 1 family.

The protein localises to the cell membrane. Functionally, receptor for C-C type chemokine. Binds and responds to a variety of chemokines, including CCL11, CCL26, CCL7, CCL13, RANTES(CCL5) and CCL15. Subsequently transduces a signal by increasing the intracellular calcium ions level. In addition acts as a possible functional receptor for NARS1. The polypeptide is C-C chemokine receptor type 3 (CCR3) (Cavia porcellus (Guinea pig)).